The primary structure comprises 321 residues: Cytochrome f (321 aa).

The signal sequence occupies residues Met1–Ala38. Phe39, Cys59, Cys62, and His63 together coordinate heme. A helical transmembrane segment spans residues Val287–Leu306.

This sequence belongs to the cytochrome f family. As to quaternary structure, the 4 large subunits of the cytochrome b6-f complex are cytochrome b6, subunit IV (17 kDa polypeptide, petD), cytochrome f and the Rieske protein, while the 4 small subunits are PetG, PetL, PetM and PetN. The complex functions as a dimer. Requires heme as cofactor.

It is found in the plastid. It localises to the chloroplast thylakoid membrane. Functionally, component of the cytochrome b6-f complex, which mediates electron transfer between photosystem II (PSII) and photosystem I (PSI), cyclic electron flow around PSI, and state transitions. The polypeptide is Cytochrome f (petA) (Guillardia theta (Cryptophyte)).